A 371-amino-acid chain; its full sequence is MAATEGTVVVKIGTSSLTDMQTGSLRLSVLGPLVEVLTRLRSQGYAVILVSSGAVGIGCARLGLRQRPTAIAEKQAVAAVGQGRLIRLYDDLFSALNQPIAQVLLTRGDFVERSRYVNANRTFTQLLQMGVIPIVNENDTVAVEELKFGDNDSLSALVASMVQAKWLILLTDVDRLYSADPHRDPSAEPIERVWRGMPLQIKAEAHGNSGWGTGGMATKLAAAQIATAAGVTVVITNGKRPDQIPAILAGEPIGTRFEPAPQPVSARKRWIAYGLIPEGSLTLDEGAVRAICEQGRSLLPAGITDVSGDFEAGAAVRLCDPGGREVGRGLVNYSAEELRRIKGKKTAEIPYILGYEGVDTAVHRDNLALLD.

ATP is bound at residue Lys11. The substrate site is built by Ser52, Asp139, and Asn151. ATP-binding positions include Thr171–Asp172 and Thr213–Lys219. Positions Glu278–Glu356 constitute a PUA domain.

Belongs to the glutamate 5-kinase family.

Its subcellular location is the cytoplasm. The enzyme catalyses L-glutamate + ATP = L-glutamyl 5-phosphate + ADP. It participates in amino-acid biosynthesis; L-proline biosynthesis; L-glutamate 5-semialdehyde from L-glutamate: step 1/2. Catalyzes the transfer of a phosphate group to glutamate to form L-glutamate 5-phosphate. The polypeptide is Glutamate 5-kinase (Synechococcus sp. (strain JA-3-3Ab) (Cyanobacteria bacterium Yellowstone A-Prime)).